Here is a 231-residue protein sequence, read N- to C-terminus: Large ribosomal subunit protein uL1 (231 aa).

It belongs to the universal ribosomal protein uL1 family. As to quaternary structure, part of the 50S ribosomal subunit.

In terms of biological role, binds directly to 23S rRNA. The L1 stalk is quite mobile in the ribosome, and is involved in E site tRNA release. Protein L1 is also a translational repressor protein, it controls the translation of the L11 operon by binding to its mRNA. This is Large ribosomal subunit protein uL1 from Acetivibrio thermocellus (strain ATCC 27405 / DSM 1237 / JCM 9322 / NBRC 103400 / NCIMB 10682 / NRRL B-4536 / VPI 7372) (Clostridium thermocellum).